The chain runs to 223 residues: Urease accessory protein UreF (223 aa).

Belongs to the UreF family. UreD, UreF and UreG form a complex that acts as a GTP-hydrolysis-dependent molecular chaperone, activating the urease apoprotein by helping to assemble the nickel containing metallocenter of UreC. The UreE protein probably delivers the nickel.

It is found in the cytoplasm. In terms of biological role, required for maturation of urease via the functional incorporation of the urease nickel metallocenter. The polypeptide is Urease accessory protein UreF (Mesorhizobium japonicum (strain LMG 29417 / CECT 9101 / MAFF 303099) (Mesorhizobium loti (strain MAFF 303099))).